The following is a 437-amino-acid chain: MLDKNKQIWFIGIKGTGMASLALVLHDLGYNVAGSDIEKYTFTQVPLEKAGIEVKDFDPANIKSNDEQVIVKGNAFKQDNPEVAACLDKNVEWQSYPDTVEEIVQMHTSIGVSGTHGKTSTTSLLAHVLGEVAPTSYLIGDGRGKGVADSRFFVYEADEYRRHFLAYHPDYQIMTNIDFDHPDYFKDQDDYTSAFQTAADQTKKALFVWGDDKRLQSLKTDIPKYTYGFKDTDDFQAVNIEKTTTGSKFNVLAHGKDLGRFEIHLFGDHSILNTTAVIAVAYTEKVPMEDIKEGLLTFKGAKRRFAEKDFGDVSVIDDYAHHPTEMRATIQAARQKFPDKELVVVFQPHTFSRTKKYQKDFEEILRDVDKAYVTPIYASAREASGDISSEDLVNNIPGSEVIDLDNIADLTKHKNAVVVFMGAGDIPKYEDAYEKLL.

114-120 is an ATP binding site; the sequence is GTHGKTS.

Belongs to the MurCDEF family.

Its subcellular location is the cytoplasm. The enzyme catalyses UDP-N-acetyl-alpha-D-muramate + L-alanine + ATP = UDP-N-acetyl-alpha-D-muramoyl-L-alanine + ADP + phosphate + H(+). It functions in the pathway cell wall biogenesis; peptidoglycan biosynthesis. Its function is as follows. Cell wall formation. The protein is UDP-N-acetylmuramate--L-alanine ligase of Lactobacillus gasseri (strain ATCC 33323 / DSM 20243 / BCRC 14619 / CIP 102991 / JCM 1131 / KCTC 3163 / NCIMB 11718 / NCTC 13722 / AM63).